We begin with the raw amino-acid sequence, 1196 residues long: MATWNASQIILNSMSNIIESPQSKPRPVMASNGASLFIPVTMEVPCDQGTRMWWAFLASSMVTFFGGLFIILVWRTFKYLWTVCCHCGGKNKEAQKVVNVASSQVTDGDYKPTDDKEEVGVAEVGWMTSVKDWAGVMISAQTLTGRVLVVTVFALSIGALMIYFIDSSNPIESCQNFYKDFTLQIDMAFNIFFLLYFGLRFIAANDKLWFWLEVNSVVDFFTVPPVFVSVYLNRSWLGLRFLRALRLIQFSEILQFLNILKTSNSIKLVNLCSIFISTWLTAAGFIHLVENSGDPWRNFENSQDLSYWECMYLLMVTMSTVGYGDVYAKTTLGRLFMVFFILGGLAMFASYVPEIIELIGNRKKYGGSYSAVSGRKHIVVCGHITLESVSNFLKDFLHKDRDDVNVEIVFLHNISPNLELEALFKKHFTQVEFYQGSVLNPHDLARVKIESADACLILANKYCADPDAEDASNIMRVISIKNYHPKIRIITQMLQYHNKAHLLNIPSWNWKDGDDAICLAELKLGFIAQSCLAQGLSTMLANLFSMRSFIKIEEDTWQKYYLEGVANEMYTEYLSSAFVGLSFPAVCELCFVKLKLLMIAIEYKSEKGESRILINPGNHMKIKEGTLGFFIASDAKEVKRAFFYCKACHDDITDPKRIKKCACKRLEDEQPSALSPKKKQRNGGMRHSPNTSPNMMRHDPLLMTGNDQIDNMDSSSVKRYDSTGMFHWCPAKELDKVLLTRSEAAMTVLSGHVVVCIFGDMTSALIGVRNLVMPLRASNFHYHELKHIVFVGSLDYIKREWETLHNFPKVSILPGTPLSRADLRAVNINLCDMCVILSANQNNIDDTSLQDKECILASLNIKSMQFDDSIGLLQANSQGFTPPGMERSSPDNSPLHGVARQASITTGANIPIITELVNDSNVQFLDQDDDDDPDTELYLTQPFACGTAFAVSVLDSLMSATYFNDNILTLIRTLVTGGATPELEALVAEENALRGGYSTPQTLANRDRCRVAQLALYDGPFADLGDGGCYGDLYCKALKTYNMLCFGIYRLRDAHISTPSQCTKRYVITNPPYEFELVPTDLIFCLMQFDHNASQSRASLSHSSHSSHSSSKKSSSVTSILHTASANRQNRVKARDSRDKQKMGQAEKKWYTDETENNYPRNIQIKPMSTHMANQINQYKSTSSLIPPIREVEDEC.

At 1–52 (MATWNASQIILNSMSNIIESPQSKPRPVMASNGASLFIPVTMEVPCDQGTRM) the chain is on the extracellular side. Residues 53–73 (WWAFLASSMVTFFGGLFIILV) traverse the membrane as a helical segment. The Cytoplasmic segment spans residues 74–146 (WRTFKYLWTV…MISAQTLTGR (73 aa)). The chain crosses the membrane as a helical span at residues 147-167 (VLVVTVFALSIGALMIYFIDS). Residues 168–182 (SNPIESCQNFYKDFT) lie on the Extracellular side of the membrane. Residues 183 to 203 (LQIDMAFNIFFLLYFGLRFIA) traverse the membrane as a helical segment. Over 204–207 (ANDK) the chain is Cytoplasmic. The helical transmembrane segment at 208-228 (LWFWLEVNSVVDFFTVPPVFV) threads the bilayer. Topologically, residues 229 to 232 (SVYL) are extracellular. The chain crosses the membrane as a helical; Voltage-sensor span at residues 233 to 253 (NRSWLGLRFLRALRLIQFSEI). Residues 254 to 268 (LQFLNILKTSNSIKL) are Cytoplasmic-facing. A helical transmembrane segment spans residues 269–289 (VNLCSIFISTWLTAAGFIHLV). At 290–303 (ENSGDPWRNFENSQ) the chain is on the extracellular side. Positions 304 to 326 (DLSYWECMYLLMVTMSTVGYGDV) form an intramembrane region, pore-forming. Residues 320-323 (TVGY) carry the Selectivity for potassium motif. At 327–335 (YAKTTLGRL) the chain is on the extracellular side. The chain crosses the membrane as a helical span at residues 336 to 356 (FMVFFILGGLAMFASYVPEII). The Cytoplasmic portion of the chain corresponds to 357–1196 (ELIGNRKKYG…PPIREVEDEC (840 aa)). One can recognise an RCK N-terminal 1 domain in the interval 375-517 (RKHIVVCGHI…WNWKDGDDAI (143 aa)). Mg(2+) contacts are provided by E407, Q430, and E432. Residues 524-544 (LGFIAQSCLAQGLSTMLANLF) are segment S7. Residues 581–601 (LSFPAVCELCFVKLKLLMIAI) are segment S8. Positions 645 to 649 (CKACH) are heme-binding motif. Positions 672–697 (SALSPKKKQRNGGMRHSPNTSPNMMR) are disordered. Residues 748–768 (VLSGHVVVCIFGDMTSALIGV) form a segment S9 region. An RCK N-terminal 2 domain is found at 750–894 (SGHVVVCIFG…MERSSPDNSP (145 aa)). A Calcium bowl motif is present at residues 914–936 (TELVNDSNVQFLDQDDDDDPDTE). 4 residues coordinate Ca(2+): Q923, D926, D929, and D931. The segment S10 stretch occupies residues 943-963 (FACGTAFAVSVLDSLMSATYF). Low complexity predominate over residues 1098 to 1119 (ASLSHSSHSSHSSSKKSSSVTS). The disordered stretch occupies residues 1098–1149 (ASLSHSSHSSHSSSKKSSSVTSILHTASANRQNRVKARDSRDKQKMGQAEKK). A compositionally biased stretch (polar residues) spans 1120-1129 (ILHTASANRQ). Over residues 1133–1149 (KARDSRDKQKMGQAEKK) the composition is skewed to basic and acidic residues.

It belongs to the potassium channel family. Calcium-activated (TC 1.A.1.3) subfamily. KCa1.1/KCNMA1 sub-subfamily. In terms of assembly, homotetramer; which constitutes the calcium-activated potassium channel. In terms of tissue distribution, expressed in both the somites and neural tube of 1 day embryos. Within the nervous system, it is restricted to dorsal parts, and expressed centrally in regions dedicated to processing of sensory information. Six hours later, it is expressed segmentally within the somites. At this time, it is expressed in a primary sensory organ, the trigeminal ganglion. By 2 days, it is also expressed in other primary sensory organs, such as the otic vesicle, and the eye. Within the retina, it is expressed to an internal layer. In the developing otic vesicle, it is abundantly expressed near the apical surface. Isoform 3 is neural-specific, and is only expressed during late stages of neuronal differentiation.

It is found in the cell membrane. It carries out the reaction K(+)(in) = K(+)(out). Ethanol and carbon monoxide-bound heme increase channel activation. Heme inhibits channel activation. Potassium channel activated by both membrane depolarization or increase in cytosolic Ca(2+) that mediates export of K(+). It is also activated by the concentration of cytosolic Mg(2+). Its activation dampens the excitatory events that elevate the cytosolic Ca(2+) concentration and/or depolarize the cell membrane. It therefore contributes to repolarization of the membrane potential. Plays a key role in controlling excitability in a number of systems, such as regulation of the contraction of smooth muscle, the tuning of hair cells in the cochlea, regulation of transmitter release, and innate immunity. In smooth muscles, its activation by high level of Ca(2+), caused by ryanodine receptors in the sarcoplasmic reticulum, regulates the membrane potential. In cochlea cells, its number and kinetic properties partly determine the characteristic frequency of each hair cell and thereby helps to establish a tonotopic map. Highly sensitive to both iberiotoxin (IbTx) and charybdotoxin (CTX). This is Calcium-activated potassium channel subunit alpha-1 (kcnma1) from Xenopus laevis (African clawed frog).